The sequence spans 166 residues: Ribosome maturation factor RimM (166 aa).

The 74-residue stretch at 90–163 (EGEFLVSQII…TVTIELLEGL (74 aa)) folds into the PRC barrel domain.

This sequence belongs to the RimM family. As to quaternary structure, binds ribosomal protein uS19.

The protein resides in the cytoplasm. Functionally, an accessory protein needed during the final step in the assembly of 30S ribosomal subunit, possibly for assembly of the head region. Essential for efficient processing of 16S rRNA. May be needed both before and after RbfA during the maturation of 16S rRNA. It has affinity for free ribosomal 30S subunits but not for 70S ribosomes. The polypeptide is Ribosome maturation factor RimM (Oenococcus oeni (strain ATCC BAA-331 / PSU-1)).